The chain runs to 466 residues: L-seryl-tRNA(Sec) selenium transferase (466 aa).

An N6-(pyridoxal phosphate)lysine modification is found at Lys292.

It belongs to the SelA family. Requires pyridoxal 5'-phosphate as cofactor.

It localises to the cytoplasm. The catalysed reaction is L-seryl-tRNA(Sec) + selenophosphate + H(+) = L-selenocysteinyl-tRNA(Sec) + phosphate. Its pathway is aminoacyl-tRNA biosynthesis; selenocysteinyl-tRNA(Sec) biosynthesis; selenocysteinyl-tRNA(Sec) from L-seryl-tRNA(Sec) (bacterial route): step 1/1. Its function is as follows. Converts seryl-tRNA(Sec) to selenocysteinyl-tRNA(Sec) required for selenoprotein biosynthesis. This is L-seryl-tRNA(Sec) selenium transferase from Rhizobium meliloti (strain 1021) (Ensifer meliloti).